The sequence spans 406 residues: 2,3-bisphosphoglycerate-independent phosphoglycerate mutase (406 aa).

It belongs to the BPG-independent phosphoglycerate mutase family. A-PGAM subfamily.

It carries out the reaction (2R)-2-phosphoglycerate = (2R)-3-phosphoglycerate. It participates in carbohydrate degradation; glycolysis; pyruvate from D-glyceraldehyde 3-phosphate: step 3/5. In terms of biological role, catalyzes the interconversion of 2-phosphoglycerate and 3-phosphoglycerate. The chain is 2,3-bisphosphoglycerate-independent phosphoglycerate mutase from Methanococcus maripaludis (strain DSM 14266 / JCM 13030 / NBRC 101832 / S2 / LL).